The primary structure comprises 185 residues: Ribosome-recycling factor (185 aa).

The protein belongs to the RRF family.

The protein resides in the cytoplasm. Responsible for the release of ribosomes from messenger RNA at the termination of protein biosynthesis. May increase the efficiency of translation by recycling ribosomes from one round of translation to another. The protein is Ribosome-recycling factor of Oceanobacillus iheyensis (strain DSM 14371 / CIP 107618 / JCM 11309 / KCTC 3954 / HTE831).